A 52-amino-acid polypeptide reads, in one-letter code: Alpha-crystallin B chain (52 aa).

Belongs to the small heat shock protein (HSP20) family. Homodimer. Aggregates with homologous proteins, including alpha-A-crystallin and the small heat shock protein HSPB1, to form large heteromeric complexes.

May contribute to the transparency and refractive index of the lens. The chain is Alpha-crystallin B chain (CRYAB) from Eudromia elegans (Elegant crested-tinamou).